The sequence spans 223 residues: Neurotrophic factor BDNF precursor form (223 aa).

The signal sequence occupies residues Ser1–Ala5. Positions Ala6 to Arg114 are excised as a propeptide. Asn107 is a glycosylation site (N-linked (GlcNAc...) asparagine). Intrachain disulfides connect Cys127–Cys194 and Cys172–Cys223.

Belongs to the NGF-beta family.

It is found in the secreted. In terms of biological role, promotes the survival of neuronal populations that are all located either in the central nervous system or directly connected to it. The sequence is that of Neurotrophic factor BDNF precursor form (BDNF) from Boa constrictor (Boa).